A 290-amino-acid polypeptide reads, in one-letter code: Thioredoxin-like protein 1 (290 aa).

One can recognise a Thioredoxin domain in the interval 24–104 (VDCYADWCGP…PQALKEKVAL (81 aa)). Cys31 and Cys34 are oxidised to a cystine. One can recognise a PITH domain in the interval 118–290 (SSSAPVKGFA…SKGKLQKVEA (173 aa)).

The protein resides in the cytoplasm. It is found in the nucleus. Functionally, has a role in cellular detoxification of alkyl hydroperoxide. This is Thioredoxin-like protein 1 (txl1) from Schizosaccharomyces pombe (strain 972 / ATCC 24843) (Fission yeast).